The following is a 787-amino-acid chain: Pyridoxal-dependent decarboxylase domain-containing protein 1 (787 aa).

Residues 29 to 41 (EDSQRRTEEENGK) are compositionally biased toward basic and acidic residues. The interval 29-52 (EDSQRRTEEENGKKLLSGDIPGPL) is disordered. The residue at position 653 (S653) is a Phosphoserine. The disordered stretch occupies residues 683-787 (QGSGVTPPQT…PQVEEPESLR (105 aa)). Residues 685–697 (SGVTPPQTPTGTR) show a composition bias toward polar residues. Phosphothreonine is present on residues T688 and T692. Phosphoserine occurs at positions 711, 719, and 723. The segment covering 735–745 (QSSGGQEASEA) has biased composition (polar residues). A phosphoserine mark is found at S747 and S785. Residues 774–787 (QDDRPQVEEPESLR) show a composition bias toward basic and acidic residues.

Belongs to the group II decarboxylase family. Pyridoxal 5'-phosphate is required as a cofactor.

This chain is Pyridoxal-dependent decarboxylase domain-containing protein 1 (PDXDC1), found in Bos taurus (Bovine).